A 358-amino-acid polypeptide reads, in one-letter code: Arogenate dehydrogenase 2, chloroplastic (358 aa).

The N-terminal 36 residues, 1–36, are a transit peptide targeting the chloroplast; it reads MLLHFSPAKPLISPPNLRRNSPTFLISPPRSLRIRA. A Prephenate/arogenate dehydrogenase domain is found at 59-338; sequence LKIAVLGFGN…KKTEQKLLND (280 aa). Positions 336 to 358 are disordered; it reads LNDGGVVPMNDISSSSSSSSSSS. Low complexity predominate over residues 348 to 358; sequence SSSSSSSSSSS.

It belongs to the prephenate/arogenate dehydrogenase family. Expressed in roots, stems, leaves, flowers, siliques and seeds. More abundant in seeds.

The protein localises to the plastid. It is found in the chloroplast. It carries out the reaction L-arogenate + NADP(+) = L-tyrosine + CO2 + NADPH. Its pathway is amino-acid biosynthesis; L-tyrosine biosynthesis; L-tyrosine from L-arogenate (NADP(+) route): step 1/1. Involved in the biosynthesis of tyrosine. Has a weak prephenate dehydrogenase activity. This is Arogenate dehydrogenase 2, chloroplastic (TYRAAT2) from Arabidopsis thaliana (Mouse-ear cress).